A 186-amino-acid polypeptide reads, in one-letter code: Nascent polypeptide-associated complex subunit beta (186 aa).

One can recognise an NAC-A/B domain in the interval 65–130 (GADDKKLQTT…GEEKELTELV (66 aa)). The interval 153-186 (QNMQKQAGAEGKKDEDEDDIPDLVEGENFESNVE) is disordered. Residues 167–186 (EDEDDIPDLVEGENFESNVE) are compositionally biased toward acidic residues.

The protein belongs to the NAC-beta family. As to quaternary structure, part of the nascent polypeptide-associated complex (NAC), consisting of egd2 and egd1. NAC associates with ribosomes via egd1.

It localises to the cytoplasm. Its subcellular location is the nucleus. Its function is as follows. Component of the nascent polypeptide-associated complex (NAC), a dynamic component of the ribosomal exit tunnel, protecting the emerging polypeptides from interaction with other cytoplasmic proteins to ensure appropriate nascent protein targeting. The NAC complex also promotes mitochondrial protein import by enhancing productive ribosome interactions with the outer mitochondrial membrane and blocks the inappropriate interaction of ribosomes translating non-secretory nascent polypeptides with translocation sites in the membrane of the endoplasmic reticulum. EGD1 may act as a transcription factor that exert a negative effect on the expression of several genes that are transcribed by RNA polymerase II. The chain is Nascent polypeptide-associated complex subunit beta (egd1) from Aspergillus fumigatus (strain ATCC MYA-4609 / CBS 101355 / FGSC A1100 / Af293) (Neosartorya fumigata).